The chain runs to 536 residues: MKTSIVLSIVALFLTSKASADCWSERLGWPCCSDSNAEVIYVDDDGDWGVENNDWCGIQKEEENNNSWDMGDWNQGGNQGGGMPWGDFGGNQGGGMQWGDFGGNQGGGMPWGDFGGNQGGGMPWGDFGGNQGGNQGGGMPWGDFGGNQGGNQGGGMPWGDFGGNQGGGMQWGDFGGNQGGNQGGGMPWGDFGGNQGGGMQWGDFGGNQGGNQGGGMPWGDFGGNQGGGMQWGDFGGNQGGGMQWGDFGGNQGGNQDWGNQGGNSGPTVEYSTDVDCSGKTLKSNTNLNINGRKVIVKFPSGFTGDKAAPLLINYHPIMGSASQWESGSQTAKAALNDGAIVAFMDGAQGPMGQAWNVGPCCTDADDVQFTRNFIKEITSKACVDPKRIYAAGFSMGGGMSNYAGCQLADVIAAAAPSAFDLAKEIVDGGKCKPARPFPILNFRGTQDNVVMYNGGLSQVVQGKPITFMGAKNNFKEWAKMNGCTGEPKQNTPGNNCEMYENCKGGVKVGLCTINGGGHAEGDGKMGWDFVKQFSLP.

The first 20 residues, 1 to 20, serve as a signal peptide directing secretion; that stretch reads MKTSIVLSIVALFLTSKASA. The 39-residue stretch at 21-59 folds into the CBM10 domain; the sequence is DCWSERLGWPCCSDSNAEVIYVDDDGDWGVENNDWCGIQ. The segment at 22 to 59 is cellulose-binding; it reads CWSERLGWPCCSDSNAEVIYVDDDGDWGVENNDWCGIQ. Asparagine 65 is a glycosylation site (N-linked (GlcNAc...) asparagine). 12 consecutive repeat copies span residues 78–90, 91–103, 104–116, 117–129, 134–146, 151–163, 164–176, 181–193, 194–206, 211–223, 224–236, and 237–249. The segment at 78–249 is 12 X 13 AA repeats of N-Q-G-G-G-M-[PQ]-W-G-D-F-G-G; it reads NQGGGMPWGD…GGMQWGDFGG (172 aa). Residues 203 to 252 are compositionally biased toward gly residues; that stretch reads DFGGNQGGNQGGGMPWGDFGGNQGGGMQWGDFGGNQGGGMQWGDFGGNQG. The tract at residues 203 to 273 is disordered; that stretch reads DFGGNQGGNQ…SGPTVEYSTD (71 aa). The segment at 257–536 is catalytic; the sequence is WGNQGGNSGP…WDFVKQFSLP (280 aa).

Component of the multienzyme cellulase-hemicellulase complex.

The protein localises to the secreted. It catalyses the reaction feruloyl-polysaccharide + H2O = ferulate + polysaccharide.. Its activity is regulated as follows. Inhibited by the specific serine esterase inhibitor AEBSF. Its function is as follows. Involved in degradation of plant cell walls. Hydrolyzes of the feruloyl-arabinose ester bond in arabinoxylans as well as the feruloyl-galactose and feruloyl-arabinose ester bonds in pectin. The polypeptide is Feruloyl esterase B (ESTA) (Piromyces equi).